Consider the following 278-residue polypeptide: Small ribosomal subunit protein uS3 (278 aa).

A KH type-2 domain is found at 39-107; sequence VRDFLKKRLA…PVHVNIEEVR (69 aa). Residues 217–278 form a disordered region; the sequence is VENENEARRG…DAAAVEKEVS (62 aa). Basic and acidic residues predominate over residues 230–239; it reads PRNDAGDNRG.

It belongs to the universal ribosomal protein uS3 family. As to quaternary structure, part of the 30S ribosomal subunit. Forms a tight complex with proteins S10 and S14.

Binds the lower part of the 30S subunit head. Binds mRNA in the 70S ribosome, positioning it for translation. The chain is Small ribosomal subunit protein uS3 from Aromatoleum aromaticum (strain DSM 19018 / LMG 30748 / EbN1) (Azoarcus sp. (strain EbN1)).